A 370-amino-acid chain; its full sequence is Gibberellin 3-beta-dioxygenase 2-2 (370 aa).

The Fe2OG dioxygenase domain maps to 205 to 306; the sequence is MTATMHLNWY…RISLGYFLGP (102 aa). Fe cation-binding residues include His229, Asp231, and His287. Arg297 is a catalytic residue.

The protein belongs to the iron/ascorbate-dependent oxidoreductase family. GA3OX subfamily. Requires L-ascorbate as cofactor. It depends on Fe cation as a cofactor.

It carries out the reaction gibberellin A20 + 2-oxoglutarate + O2 = gibberellin A1 + succinate + CO2. In terms of biological role, converts the inactive gibberellin precursors GA9 and GA20 in the bioactives gibberellins GA4 and GA1. In Triticum aestivum (Wheat), this protein is Gibberellin 3-beta-dioxygenase 2-2 (GA3ox2-2).